A 497-amino-acid polypeptide reads, in one-letter code: Probable cytosol aminopeptidase (497 aa).

Residues Lys-267 and Asp-272 each contribute to the Mn(2+) site. The active site involves Lys-279. Positions 290, 349, and 351 each coordinate Mn(2+). Arg-353 is a catalytic residue.

Belongs to the peptidase M17 family. It depends on Mn(2+) as a cofactor.

The protein localises to the cytoplasm. The enzyme catalyses Release of an N-terminal amino acid, Xaa-|-Yaa-, in which Xaa is preferably Leu, but may be other amino acids including Pro although not Arg or Lys, and Yaa may be Pro. Amino acid amides and methyl esters are also readily hydrolyzed, but rates on arylamides are exceedingly low.. The catalysed reaction is Release of an N-terminal amino acid, preferentially leucine, but not glutamic or aspartic acids.. Functionally, presumably involved in the processing and regular turnover of intracellular proteins. Catalyzes the removal of unsubstituted N-terminal amino acids from various peptides. The polypeptide is Probable cytosol aminopeptidase (Nitrosomonas europaea (strain ATCC 19718 / CIP 103999 / KCTC 2705 / NBRC 14298)).